The sequence spans 359 residues: Carbamoyl phosphate synthase arginine-specific small chain (359 aa).

Residues 1 to 168 (MKAYLVLATG…VETFEGNGPH (168 aa)) form a CPSase region. Residues serine 45, glycine 216, and glycine 218 each coordinate L-glutamine. A Glutamine amidotransferase type-1 domain is found at 168-355 (HIVLIDYGFK…IDDVAAKGRE (188 aa)). Cysteine 243 serves as the catalytic Nucleophile. L-glutamine-binding residues include leucine 244, glutamine 247, asparagine 285, and tyrosine 288. Catalysis depends on residues histidine 328 and glutamate 330.

It belongs to the CarA family. As to quaternary structure, composed of two chains; the small (or glutamine) chain promotes the hydrolysis of glutamine to ammonia, which is used by the large (or ammonia) chain to synthesize carbamoyl phosphate. Tetramer of heterodimers (alpha,beta)4.

It carries out the reaction hydrogencarbonate + L-glutamine + 2 ATP + H2O = carbamoyl phosphate + L-glutamate + 2 ADP + phosphate + 2 H(+). It catalyses the reaction L-glutamine + H2O = L-glutamate + NH4(+). The protein operates within amino-acid biosynthesis; L-arginine biosynthesis; carbamoyl phosphate from bicarbonate: step 1/1. Small subunit of the glutamine-dependent carbamoyl phosphate synthetase (CPSase). CPSase catalyzes the formation of carbamoyl phosphate from the ammonia moiety of glutamine, carbonate, and phosphate donated by ATP, constituting the first step of the biosynthetic pathway leading to arginine and/or urea. The small subunit (glutamine amidotransferase) binds and cleaves glutamine to supply the large subunit with the substrate ammonia. The polypeptide is Carbamoyl phosphate synthase arginine-specific small chain (Halalkalibacterium halodurans (strain ATCC BAA-125 / DSM 18197 / FERM 7344 / JCM 9153 / C-125) (Bacillus halodurans)).